The following is a 234-amino-acid chain: 1-(5-phosphoribosyl)-5-[(5-phosphoribosylamino)methylideneamino] imidazole-4-carboxamide isomerase (234 aa).

Catalysis depends on Asp9, which acts as the Proton acceptor. The active-site Proton donor is Asp131.

It belongs to the HisA/HisF family.

It localises to the cytoplasm. It carries out the reaction 1-(5-phospho-beta-D-ribosyl)-5-[(5-phospho-beta-D-ribosylamino)methylideneamino]imidazole-4-carboxamide = 5-[(5-phospho-1-deoxy-D-ribulos-1-ylimino)methylamino]-1-(5-phospho-beta-D-ribosyl)imidazole-4-carboxamide. It functions in the pathway amino-acid biosynthesis; L-histidine biosynthesis; L-histidine from 5-phospho-alpha-D-ribose 1-diphosphate: step 4/9. This Staphylococcus aureus (strain bovine RF122 / ET3-1) protein is 1-(5-phosphoribosyl)-5-[(5-phosphoribosylamino)methylideneamino] imidazole-4-carboxamide isomerase.